Reading from the N-terminus, the 374-residue chain is Speckle-type POZ protein (374 aa).

Residues 31 to 161 enclose the MATH domain; that stretch reads KFSYMWTINN…DDKLTLFCEV (131 aa). Residues 71-191 are required for nuclear localization; sequence VNPKGLDEES…PECRLADELG (121 aa). Positions 123-133 are important for binding substrate proteins; sequence YRFVQGKDWGF. A BTB domain is found at 173-297; sequence QNTMNMVKVP…MCEDALCSNL (125 aa). Important for homodimerization regions lie at residues 186 to 217 and 297 to 355; these read LADE…HKAI and LSVE…AYRS.

Belongs to the Tdpoz family. Interacts with GLI2 and GLI3. Homodimer and homooligomer. Heterodimer with SPOPL. Each dimer interacts with two CUL3 molecules. Part of cullin-RING-based BCR (BTB-CUL3-RBX1) E3 ubiquitin-protein ligase complexes that contain CUL3 and homodimeric SPOP, or the heterodimer formed by SPOP and SPOPL, plus a target protein, such as MACROH2A1, PDX1/IPF1, BMI1, BRMS1 and DAXX. Interacts with IRF1; this interaction mediates IRF1 proteasomal degradation. Interacts with HNF1A.

It localises to the nucleus. The protein localises to the nucleus speckle. Its pathway is protein modification; protein ubiquitination. Functionally, component of a cullin-RING-based BCR (BTB-CUL3-RBX1) E3 ubiquitin-protein ligase complex that mediates the ubiquitination of target proteins, leading most often to their proteasomal degradation. In complex with CUL3, involved in ubiquitination and proteasomal degradation of BRMS1, DAXX, PDX1/IPF1, GLI2 and GLI3. In complex with CUL3, involved in ubiquitination of MACROH2A1 and BMI1; this does not lead to their proteasomal degradation. Inhibits transcriptional activation of PDX1/IPF1 targets, such as insulin, by promoting PDX1/IPF1 degradation. The cullin-RING-based BCR (BTB-CUL3-RBX1) E3 ubiquitin-protein ligase complex containing homodimeric SPOP has higher ubiquitin ligase activity than the complex that contains the heterodimer formed by SPOP and SPOPL. Involved in the regulation of bromodomain and extra-terminal motif (BET) proteins BRD2, BRD3, BRD4 stability.Plays an essential role for proper translation, but not for their degradation, of critical DNA replication licensing factors CDT1 and CDC6, thereby participating in DNA synthesis and cell proliferation. Regulates interferon regulatory factor 1/IRF1 proteasomal turnover by targeting S/T-rich degrons in IRF1. Involved in ubiquitination of BRDT and promotes its degradation, thereby regulates histone removal in early condensing spermatids prior to histone-to-protamine exchange. This is Speckle-type POZ protein (SPOP) from Bos taurus (Bovine).